Here is a 30-residue protein sequence, read N- to C-terminus: QRACPRILKKCRRDSDCPGECICKENGYCG.

Gln-1 bears the Pyrrolidone carboxylic acid mark. Intrachain disulfides connect Cys-4–Cys-21, Cys-11–Cys-23, and Cys-17–Cys-29.

The protein localises to the secreted. Its function is as follows. Inhibits trypsin; probably participates in a plant defense mechanism. The polypeptide is Trypsin inhibitor 3 (Momordica cochinchinensis (Spiny bitter cucumber)).